The primary structure comprises 391 residues: NADH-quinone oxidoreductase subunit D (391 aa).

Belongs to the complex I 49 kDa subunit family. As to quaternary structure, NDH-1 is composed of 14 different subunits. Subunits NuoB, C, D, E, F, and G constitute the peripheral sector of the complex.

The protein resides in the cell inner membrane. It catalyses the reaction a quinone + NADH + 5 H(+)(in) = a quinol + NAD(+) + 4 H(+)(out). Its function is as follows. NDH-1 shuttles electrons from NADH, via FMN and iron-sulfur (Fe-S) centers, to quinones in the respiratory chain. The immediate electron acceptor for the enzyme in this species is believed to be ubiquinone. Couples the redox reaction to proton translocation (for every two electrons transferred, four hydrogen ions are translocated across the cytoplasmic membrane), and thus conserves the redox energy in a proton gradient. The sequence is that of NADH-quinone oxidoreductase subunit D from Pelagibacter ubique (strain HTCC1062).